The chain runs to 86 residues: EMBRYO SURROUNDING FACTOR 1-like protein 2 (86 aa).

Residues 1–21 (MKSHIAIICIIMLSFFSMHEY) form the signal peptide. 4 disulfide bridges follow: cysteine 39/cysteine 54, cysteine 44/cysteine 82, cysteine 52/cysteine 78, and cysteine 55/cysteine 65.

Belongs to the MEG family.

This chain is EMBRYO SURROUNDING FACTOR 1-like protein 2 (ESFL2), found in Arabidopsis thaliana (Mouse-ear cress).